A 407-amino-acid chain; its full sequence is Peptidase T (407 aa).

Residue His78 participates in Zn(2+) binding. Asp80 is an active-site residue. Residue Asp139 coordinates Zn(2+). Catalysis depends on Glu173, which acts as the Proton acceptor. The Zn(2+) site is built by Glu174, Asp196, and His378.

Belongs to the peptidase M20B family. It depends on Zn(2+) as a cofactor.

The protein localises to the cytoplasm. It carries out the reaction Release of the N-terminal residue from a tripeptide.. Its function is as follows. Cleaves the N-terminal amino acid of tripeptides. This is Peptidase T from Macrococcus caseolyticus (strain JCSC5402) (Macrococcoides caseolyticum).